An 813-amino-acid chain; its full sequence is Ribosome-releasing factor 2, mitochondrial (813 aa).

A mitochondrion-targeting transit peptide spans 1 to 20 (MLRIVWKPLKIRLPVWRRYQ). Residues 26-314 (NSIRNVGIIA…AIIDYLPSPV (289 aa)) enclose the tr-type G domain. GTP is bound by residues 35–42 (AHIDAGKT), 99–103 (DTPGH), and 153–156 (NKMD).

This sequence belongs to the TRAFAC class translation factor GTPase superfamily. Classic translation factor GTPase family. EF-G/EF-2 subfamily.

Its subcellular location is the mitochondrion. Mitochondrial GTPase that mediates the disassembly of ribosomes from messenger RNA at the termination of mitochondrial protein biosynthesis. Not involved in the GTP-dependent ribosomal translocation step during translation elongation. This is Ribosome-releasing factor 2, mitochondrial (mef2) from Schizosaccharomyces pombe (strain 972 / ATCC 24843) (Fission yeast).